A 518-amino-acid chain; its full sequence is Glutamate--cysteine ligase (518 aa).

The protein belongs to the glutamate--cysteine ligase type 1 family. Type 1 subfamily.

It carries out the reaction L-cysteine + L-glutamate + ATP = gamma-L-glutamyl-L-cysteine + ADP + phosphate + H(+). It participates in sulfur metabolism; glutathione biosynthesis; glutathione from L-cysteine and L-glutamate: step 1/2. This is Glutamate--cysteine ligase from Escherichia fergusonii (strain ATCC 35469 / DSM 13698 / CCUG 18766 / IAM 14443 / JCM 21226 / LMG 7866 / NBRC 102419 / NCTC 12128 / CDC 0568-73).